The chain runs to 180 residues: Meiotic recombination protein rec15 (180 aa).

As to quaternary structure, homomer. Interacts (via C-terminus) with hop1 (via C-terminus); the interaction is direct. Interacts (via C-terminus) with rec10; the interaction is direct. Interacts with mde2; the interaction is direct.

It localises to the nucleus. The protein resides in the chromosome. Its function is as follows. Required during the early stages of meiosis for meiotic recombination. This Schizosaccharomyces pombe (strain 972 / ATCC 24843) (Fission yeast) protein is Meiotic recombination protein rec15.